The sequence spans 320 residues: Ribosomal RNA large subunit methyltransferase F (320 aa).

Residues 1 to 20 (MHKSANSKTRKQSKGLHPRN) form a disordered region.

This sequence belongs to the methyltransferase superfamily. METTL16/RlmF family.

The protein localises to the cytoplasm. It catalyses the reaction adenosine(1618) in 23S rRNA + S-adenosyl-L-methionine = N(6)-methyladenosine(1618) in 23S rRNA + S-adenosyl-L-homocysteine + H(+). Its function is as follows. Specifically methylates the adenine in position 1618 of 23S rRNA. This is Ribosomal RNA large subunit methyltransferase F from Saccharophagus degradans (strain 2-40 / ATCC 43961 / DSM 17024).